The primary structure comprises 265 residues: MLLIPAIDLKDGHCVRLKQGDMDQATVFSEDPADMARHWLEQGARRLHLVDLNGAFAGKPKNEPAVKAILQAVREYAEKNGIEEIPVQLGGGIRDLDTIERYLDDGLSYIIIGTAAVKNPGFLHDACSAFPGQIIVGLDAKDGKVATDGWSKLSGHEVIDLAKKFEDYGCESIIYTDIGRDGMMGGVNIEATVKLAQSMTIPVIASGGVHNIKDVEALCAVQEEGIEGVICGRSIYEGTLDLRSAQDRADELSGVGPETEAEAGE.

The active-site Proton acceptor is Asp-8. Asp-139 (proton donor) is an active-site residue.

Belongs to the HisA/HisF family.

The protein localises to the cytoplasm. The enzyme catalyses 1-(5-phospho-beta-D-ribosyl)-5-[(5-phospho-beta-D-ribosylamino)methylideneamino]imidazole-4-carboxamide = 5-[(5-phospho-1-deoxy-D-ribulos-1-ylimino)methylamino]-1-(5-phospho-beta-D-ribosyl)imidazole-4-carboxamide. Its pathway is amino-acid biosynthesis; L-histidine biosynthesis; L-histidine from 5-phospho-alpha-D-ribose 1-diphosphate: step 4/9. This is 1-(5-phosphoribosyl)-5-[(5-phosphoribosylamino)methylideneamino] imidazole-4-carboxamide isomerase from Herminiimonas arsenicoxydans.